Reading from the N-terminus, the 565-residue chain is Deformed epidermal autoregulatory factor 1 homolog (565 aa).

Disordered regions lie at residues 29–62 (AAAAAESEAEEPVLSRDEDSEEDADSEAERETRR) and 162–189 (GLKGPAAPLTPGPQSPPTPLAPGQEKGG). Positions 169-181 (PLTPGPQSPPTPL) are enriched in pro residues. The residue at position 171 (Thr-171) is a Phosphothreonine. Residue Ser-176 is modified to Phosphoserine. The residue at position 179 (Thr-179) is a Phosphothreonine. The region spanning 193–273 (NWDPSVYDSE…QCLIQDGILN (81 aa)) is the SAND domain. A Nuclear localization signal motif is present at residues 301-316 (KRRKKENELPTTPVKK). The segment at 403–478 (IAPFPEAALP…QLKTLFEQAK (76 aa)) is interaction with LMO4. Thr-432 is modified (phosphothreonine). Residues Ser-443 and Ser-448 each carry the phosphoserine modification. 8 residues coordinate Zn(2+): Cys-504, Cys-507, Cys-515, Cys-518, Cys-524, Cys-528, His-536, and Cys-540. The segment at 504–540 (CVNCGREAMSECTGCHKVNYCSTFCQRKDWKDHQHVC) adopts an MYND-type zinc-finger fold.

Homodimer. Interacts with LMO4; LMO4 blocks export from nucleus. Interacts with LMO2 and CLIM2. May interact with the corepressors NCOR1 and NCRO2. Identified in a complex with XRCC5 and XRCC6. Interacts (via the SAND domain) with the DNA-PK complex subunit XRCC6; the interaction is direct and may be inhibited by DNA-binding. Post-translationally, may be phosphorylated by DNA-PK complex in a DNA independent manner (in vitro). As to expression, ubiquitous. Detected in brain, spleen, adrenal, lung, skeletal muscle, liver, kidney, and in developing germ cells in testis. In pituitary, restricted to hormone-secreting cell types.

The protein localises to the nucleus. It is found in the secreted. Its function is as follows. Transcription factor that binds to sequence with multiple copies of 5'-TTC[CG]G-3' present in its own promoter and that of the HNRPA2B1 gene. Down-regulates transcription of these genes. Binds to the retinoic acid response element (RARE) 5'-AGGGTTCACCGAAAGTTCA-3'. Activates the proenkephalin gene independently of promoter binding, probably through protein-protein interaction. When secreted, behaves as an inhibitor of cell proliferation, by arresting cells in the G0 or G1 phase. Regulates epithelial cell proliferation and side-branching in the mammary gland. Required for neural tube closure and skeletal patterning. Controls the expression of peripheral tissue antigens in pancreatic lymph nodes. Transcriptional activator of EIF4G3. May also involved in behavior. This is Deformed epidermal autoregulatory factor 1 homolog (Deaf1) from Rattus norvegicus (Rat).